The following is a 67-amino-acid chain: Large ribosomal subunit protein bL31 (67 aa).

C16, C18, C36, and C39 together coordinate Zn(2+).

This sequence belongs to the bacterial ribosomal protein bL31 family. Type A subfamily. As to quaternary structure, part of the 50S ribosomal subunit. The cofactor is Zn(2+).

Binds the 23S rRNA. This chain is Large ribosomal subunit protein bL31, found in Desulforudis audaxviator (strain MP104C).